A 308-amino-acid polypeptide reads, in one-letter code: Ribosomal RNA small subunit methyltransferase H (308 aa).

S-adenosyl-L-methionine contacts are provided by residues 36–38 (GGH), D55, F86, D103, and Q110.

The protein belongs to the methyltransferase superfamily. RsmH family.

The protein resides in the cytoplasm. The enzyme catalyses cytidine(1402) in 16S rRNA + S-adenosyl-L-methionine = N(4)-methylcytidine(1402) in 16S rRNA + S-adenosyl-L-homocysteine + H(+). Specifically methylates the N4 position of cytidine in position 1402 (C1402) of 16S rRNA. This chain is Ribosomal RNA small subunit methyltransferase H, found in Helicobacter pylori (strain P12).